A 174-amino-acid chain; its full sequence is Superoxide dismutase [Cu-Zn] (174 aa).

Positions 1–23 (MIRLSAAAALGLAAALAASPALA) are cleaved as a signal peptide. 3 residues coordinate Cu cation: histidine 68, histidine 70, and histidine 86. An intrachain disulfide couples cysteine 75 to cysteine 170. Positions 86, 95, 104, and 107 each coordinate Zn(2+). Histidine 150 contacts Cu cation.

The protein belongs to the Cu-Zn superoxide dismutase family. In terms of assembly, homodimer. Requires Cu cation as cofactor. The cofactor is Zn(2+).

The protein resides in the periplasm. The catalysed reaction is 2 superoxide + 2 H(+) = H2O2 + O2. Destroys radicals which are normally produced within the cells and which are toxic to biological systems. May function against extracytoplasmic toxic oxygen species. The polypeptide is Superoxide dismutase [Cu-Zn] (sodC) (Caulobacter vibrioides (strain ATCC 19089 / CIP 103742 / CB 15) (Caulobacter crescentus)).